The following is a 353-amino-acid chain: MTATLERRESASIWGRFCNWVTSTENRLNIGWFGVLMIPTLLTATSVFIIAFIAAPPVDIDGIREPVSGSLLYGNNIISGAIIPTSAAIGLHFYPIWEAASVDEWLYNGGPYELIVLHFLLGVACYMGREWELSYRLGMRPWIAVAYSAPVAAATAVFLIYPIGQGSFSDGMPLGISGTFNFMIVFQAEHNILMHPFHMLGVAGVFGGSLFSAMHGSLVTSSLIRETTENESANAGYKFGQEQETYNIVAAHGYFGRLIFQYASFNNSRSLHFFLAAWPVVGIWFTALGISTMAFNLNGFNFNQSVVDSQGRVINTWADIINRANLGMEVMHERNAHNFPLDLAAVEAPAVNG.

Thr2 is subject to N-acetylthreonine. Thr2 is subject to Phosphothreonine. The next 3 helical transmembrane spans lie at Asn29–Ser46, His118–Leu133, and Trp142–Ala156. His118 lines the chlorophyll a pocket. Residue Tyr126 participates in pheophytin a binding. Positions 170 and 189 each coordinate [CaMn4O5] cluster. A helical transmembrane segment spans residues Phe197–Leu218. Residue His198 coordinates chlorophyll a. A quinone is bound by residues His215 and Ser264–Phe265. His215 contacts Fe cation. Residue His272 coordinates Fe cation. The chain crosses the membrane as a helical span at residues Phe274 to Leu288. His332, Glu333, Asp342, and Ala344 together coordinate [CaMn4O5] cluster. The propeptide occupies Ala345–Gly353.

This sequence belongs to the reaction center PufL/M/PsbA/D family. PSII is composed of 1 copy each of membrane proteins PsbA, PsbB, PsbC, PsbD, PsbE, PsbF, PsbH, PsbI, PsbJ, PsbK, PsbL, PsbM, PsbT, PsbX, PsbY, PsbZ, Psb30/Ycf12, at least 3 peripheral proteins of the oxygen-evolving complex and a large number of cofactors. It forms dimeric complexes. The D1/D2 heterodimer binds P680, chlorophylls that are the primary electron donor of PSII, and subsequent electron acceptors. It shares a non-heme iron and each subunit binds pheophytin, quinone, additional chlorophylls, carotenoids and lipids. D1 provides most of the ligands for the Mn4-Ca-O5 cluster of the oxygen-evolving complex (OEC). There is also a Cl(-1) ion associated with D1 and D2, which is required for oxygen evolution. The PSII complex binds additional chlorophylls, carotenoids and specific lipids. serves as cofactor. Post-translationally, tyr-161 forms a radical intermediate that is referred to as redox-active TyrZ, YZ or Y-Z. C-terminally processed by CTPA; processing is essential to allow assembly of the oxygen-evolving complex and thus photosynthetic growth.

It localises to the plastid. The protein resides in the chloroplast thylakoid membrane. It catalyses the reaction 2 a plastoquinone + 4 hnu + 2 H2O = 2 a plastoquinol + O2. In terms of biological role, photosystem II (PSII) is a light-driven water:plastoquinone oxidoreductase that uses light energy to abstract electrons from H(2)O, generating O(2) and a proton gradient subsequently used for ATP formation. It consists of a core antenna complex that captures photons, and an electron transfer chain that converts photonic excitation into a charge separation. The D1/D2 (PsbA/PsbD) reaction center heterodimer binds P680, the primary electron donor of PSII as well as several subsequent electron acceptors. The polypeptide is Photosystem II protein D1 (Dumortiera hirsuta (Liverwort)).